The following is a 666-amino-acid chain: MGQTKSKIKSKYASYLSFIKILLKRGGVKVSTKNLIKLFQIIEQFCPWFPEQGTLDLKDWKRIGKELKQAGRKGNIIPLTVWNDWAIIKAALEPFQTEEDSISVSDAPGSCIIDCNENTRKKSQKETEGLHCEYAAEPVMAQSTQNVDYNQLQEVIYPETLKLEGKGPELVGPSESKPRGTSPLPAGQVPVTLQPQTQVKENKTQPPVAYQYWPPAELQYRPPPESQYGYPGMPPAPQGRAPYPQPPTRRLNPTAPPSRQGSELHEIIDKSRKEGDTEAWQFPVMLEPMPPGEGAQEGEPPTVEARYKSFSIKMLKDMKEGVKQYGPNSPYMRTLLDSIAHGHRLIPYDWEILAKSSLLPSQFLQFKTWWIDGVQEQVQRNRAANPPVNIDADQLLGIGQNWSTISQQALMQNEAIEQVRAICLRAWEKIQDPGSTCPSFNTVRQSSKEPYPDFVARLQDVAQKSIADEKARKVIVELMAYENANPECQSAIKPLKGKVPAGSDVISEYVKACDGIGGAMHKAMLMAQAITGVVLGGQVRTFGGKCYNCGQIGHLKKNCPVLNKQNITIQATTTGREPPDLCPRCKKGKHWASQCRSKFDKNGQPLSGNEQRGQPQAPQQTGAFPIQPFVPQGFQGQQPPLSQVFQGISQLPQYNNCPPPQAAVQQ.

G2 carries the N-myristoyl glycine lipid modification. Disordered stretches follow at residues 165–189 (GKGP…AGQV) and 217–264 (ELQY…GSEL). The span at 232-247 (GMPPAPQGRAPYPQPP) shows a compositional bias: pro residues. 2 CCHC-type zinc fingers span residues 544 to 561 (GKCY…NCPV) and 580 to 597 (DLCP…QCRS). The interval 598–641 (KFDKNGQPLSGNEQRGQPQAPQQTGAFPIQPFVPQGFQGQQPPL) is disordered. The segment covering 604–622 (QPLSGNEQRGQPQAPQQTG) has biased composition (polar residues). A compositionally biased stretch (low complexity) spans 624–640 (FPIQPFVPQGFQGQQPP).

Belongs to the beta type-B retroviral Gag protein family. HERV class-II K(HML-2) gag subfamily. In terms of processing, myristoylation is essential for retroviral assembly. Alteration of the glycine residue leads to a block in the budding of particles and an accumulation of Gag inside the cell. Post-translationally, specific enzymatic cleavages may yield mature proteins.

It localises to the cell membrane. The products of the Gag polyproteins of infectious retroviruses perform highly complex orchestrated tasks during the assembly, budding, maturation, and infection stages of the viral replication cycle. During viral assembly, the proteins form membrane associations and self-associations that ultimately result in budding of an immature virion from the infected cell. Gag precursors also function during viral assembly to selectively bind and package two plus strands of genomic RNA. Endogenous Gag proteins may have kept, lost or modified their original function during evolution. In Homo sapiens (Human), this protein is Endogenous retrovirus group K member 21 Gag polyprotein (ERVK-21).